A 36-amino-acid chain; its full sequence is F420-dependent NADP reductase (36 aa).

NADP(+) is bound at residue 9 to 12 (TGNI).

The protein belongs to the F420-dependent NADP reductase family. As to quaternary structure, homotetramer.

It carries out the reaction reduced coenzyme F420-(gamma-L-Glu)(n) + NADP(+) = oxidized coenzyme F420-(gamma-L-Glu)(n) + NADPH + 2 H(+). In terms of biological role, catalyzes the reduction of NADP(+) with F420H(2) via hydride transfer, and the reverse reaction, i.e. the reduction of F420 with NADPH. In M.organophilum, an alcohol-fermenting methanogen containing an NADP-dependent alcohol dehydrogenase, is probably involved in the regeneration of F420H(2) required for CO(2) reduction to methane. Thus, during growth on alcohol and CO(2), the F420-dependent NADP reductase probably has the function of coupling the NADP-dependent oxidation of the alcohol to the aldehyde with the F420-dependent reduction of CO(2) to methane. This chain is F420-dependent NADP reductase (fno), found in Methanogenium organophilum.